The primary structure comprises 622 residues: Apical membrane antigen 1 (622 aa).

A signal peptide spans 1–24 (MRKLYCVLLLSAFEFTYMINFGRG). The Extracellular portion of the chain corresponds to 25–546 (QNYWEHPYQN…EHKPTYDNMK (522 aa)). 5 disulfide bridges follow: Cys-149/Cys-302, Cys-217/Cys-247, Cys-263/Cys-275, Cys-320/Cys-418, and Cys-337/Cys-409. An N-linked (GlcNAc...) asparagine glycan is attached at Asn-162. Asn-286, Asn-371, Asn-421, Asn-422, and Asn-499 each carry an N-linked (GlcNAc...) asparagine glycan. Disulfide bonds link Cys-443/Cys-502, Cys-490/Cys-507, and Cys-492/Cys-509. A helical membrane pass occupies residues 547–567 (IIIASSAAVAVLATILMVYLY). Topologically, residues 568–622 (KRKGNAEKYDKMDQPQDYGKSTSRNDEMLDPEASFWGEEKRASHTTPVLMEKPYY) are cytoplasmic. Residues 577-607 (DKMDQPQDYGKSTSRNDEMLDPEASFWGEEK) form a disordered region.

This sequence belongs to the apicomplexan parasites AMA1 family.

The protein resides in the membrane. Its function is as follows. Involved in parasite invasion of erythrocytes. In Plasmodium falciparum (isolate Camp / Malaysia), this protein is Apical membrane antigen 1 (AMA-1).